Reading from the N-terminus, the 268-residue chain is N-formylmaleamate deformylase (268 aa).

The region spanning 28–251 (ALILVPGITS…NAGHMIPWDD (224 aa)) is the AB hydrolase-1 domain. Active-site charge relay system residues include S101, E221, and H245.

It carries out the reaction N-formylmaleamate + H2O = maleamate + formate + H(+). It participates in cofactor degradation; nicotinate degradation. Its function is as follows. Deformylase that catalyzes the conversion of N-formylmaleamic acid to maleamate in the aerobic nicotinate degradation pathway. In Pseudomonas putida (strain ATCC 47054 / DSM 6125 / CFBP 8728 / NCIMB 11950 / KT2440), this protein is N-formylmaleamate deformylase (nicD).